The chain runs to 151 residues: Transcriptional regulator SyrB (151 aa).

The disordered stretch occupies residues 1-61 (MADESNTGPV…RYSEQERNDK (61 aa)). A compositionally biased stretch (low complexity) spans 33-48 (PQKAAAEPAQPKAPAA). Residues 52 to 61 (RYSEQERNDK) show a composition bias toward basic and acidic residues.

Belongs to the SyrB family.

Functionally, responsible for the repression of SyrM activity. This is Transcriptional regulator SyrB (syrB) from Rhizobium meliloti (strain 1021) (Ensifer meliloti).